A 429-amino-acid polypeptide reads, in one-letter code: Probable M18 family aminopeptidase 2 (429 aa).

The Zn(2+) site is built by histidine 82, histidine 156, and histidine 401.

It belongs to the peptidase M18 family. Requires Zn(2+) as cofactor.

The sequence is that of Probable M18 family aminopeptidase 2 from Pseudomonas putida (strain GB-1).